Reading from the N-terminus, the 471-residue chain is MSSFVVPSLTAVRPRDHHDYADRIALSAATTDGVQMRTEDVRAWIAERRDANVFHVERIPFADLDQWWFEGVTGNLVHRSGRFFTIEGLHVIEHDGPHGDGPYREWQQPVIRQPEVGILGILAKEFDGVLHFLMQAKMEPGNPNLVQLSPTVQATRSNYTKAHGGTNVKLIEYFAPPDPERVIVDVLQAEQGSWFFRKSNRNMIVETVDDVPLWDDFCWLTLGQIAELMHEDETINMNSRSVLSCLPYQDITPRALFSDVQLLSWFTNERSRHDVRVRRIPLADVCGWKQGAEEIEHEDGRYFKVLAVAVKGSNREKISWTQPLVESVDLGVVAFLVRKIDGVPHVLVQARVDGGFLDTVELAPTVQCTPLNYAHLPAEERPPFLDLVQNAPRSRIRYEAIHSEEGGRFLGVRARYLVIDADEAIDPPPGYAWVTPAQLTALTRHGHYVNVEARTLLACINAAAAQPRGGA.

Residues Trp-67, 155–159 (TRSNY), Ser-193, Asn-238, Trp-288, Arg-351, 367–369 (QCT), 372–373 (NY), and 405–408 (EGGR) contribute to the dTDP-4-dehydro-6-deoxy-alpha-D-glucose site.

This sequence belongs to the hexose 2,3-dehydratase family. In terms of assembly, homodimer.

It catalyses the reaction dTDP-4-dehydro-6-deoxy-alpha-D-glucose = dTDP-3,4-didehydro-2,6-dideoxy-alpha-D-glucose + H2O. Its pathway is antibiotic biosynthesis. Functionally, involved in the biosynthesis of the 2,3,6-trideoxysugar L-epivancosamine, the terminal sugar added to the aglycone scaffold of chloroeremomycin, a member of the glycopeptide antibiotics vancomycin family. Catalyzes the removal of the hydroxyl group at position C-2 of the hexose ring of dTDP-4-dehydro-6-deoxy-alpha-D-glucopyranose, and the oxidation of the hydroxyl group at position C-3 to form a carbonyl functionality. The product of the reaction, dTDP-2,6-dideoxy-D-glycero-hex-2-enos-4-ulose, is a highly unstable diketosugar, which spontaneously forms dTDP-3,4-didehydro-2,6-dideoxy-alpha-D-glucose. The chain is dTDP-4-dehydro-6-deoxy-alpha-D-glucopyranose 2,3-dehydratase from Amycolatopsis orientalis (Nocardia orientalis).